The chain runs to 183 residues: 16 kDa gamma-zein (183 aa).

The first 19 residues, 1-19, serve as a signal peptide directing secretion; the sequence is MKVLIVALALLALAASAAS.

As to quaternary structure, interacts with OP10 (via N-terminus).

It localises to the vacuole. The protein resides in the aleurone grain. Zeins are major seed storage proteins. In Zea mays (Maize), this protein is 16 kDa gamma-zein.